Reading from the N-terminus, the 168-residue chain is Endoribonuclease YbeY (168 aa).

His-132, His-136, and His-142 together coordinate Zn(2+).

Belongs to the endoribonuclease YbeY family. Requires Zn(2+) as cofactor.

Its subcellular location is the cytoplasm. Single strand-specific metallo-endoribonuclease involved in late-stage 70S ribosome quality control and in maturation of the 3' terminus of the 16S rRNA. This is Endoribonuclease YbeY from Clostridium perfringens (strain SM101 / Type A).